A 459-amino-acid chain; its full sequence is Proton-coupled folate transporter (459 aa).

Residue M1 is modified to N-acetylmethionine. Residues 1 to 25 (MEGRANSPGEPRAWPTRSVLCRGCV) are Cytoplasmic-facing. Residues 26-44 (EPLVFLANFALVLQGPVTT) form a helical membrane-spanning segment. The Extracellular portion of the chain corresponds to 45–82 (QYLWHRFSADLGYNGTRHRDSCSNHSVDPIAQEVETLT). N-linked (GlcNAc...) asparagine glycosylation is found at N58 and N68. The cysteines at positions 66 and 298 are disulfide-linked. The helical transmembrane segment at 83 to 108 (SHWTLYMNVGGFLVGLFSSTLLGAWS) threads the bilayer. Residues 109 to 112 (DCVG) lie on the Cytoplasmic side of the membrane. Residues 113–135 (RRPLLVLASLGLLLQTVLSIFVV) form a helical membrane-spanning segment. Residues 136–140 (QLHLH) lie on the Extracellular side of the membrane. A helical membrane pass occupies residues 141-154 (IGYLVLGRILCALL). At 155–177 (GDFSGLLAASFASVADVSSSRTR) the chain is on the cytoplasmic side. Positions 156 and 185 each coordinate H(+). The helical transmembrane segment at 178–203 (TIRMALLEACIGVAGMLASFIGGFLL) threads the bilayer. The Extracellular segment spans residues 204–208 (QEQVY). The chain crosses the membrane as a helical span at residues 209–227 (VNPFWLALAVLTVMTLYAA). The Cytoplasmic portion of the chain corresponds to 228 to 266 (FCFGETVKERTPTRLFTLRHHRSVIQLYVTQAPEKSRKH). A helical membrane pass occupies residues 267–289 (LALYSLAIFVMITVHLGAQDILT). Position 281 (H281) interacts with H(+). Over 290–302 (LYELSAPLCWDSR) the chain is Extracellular. A helical membrane pass occupies residues 303-325 (LISYGSAAQQLPYLTSLLGLRLL). Topologically, residues 326 to 331 (QYCLAD) are cytoplasmic. Residues 332–351 (TWVAEIGLVFNILGMMVFAF) traverse the membrane as a helical segment. Residues 352–355 (ATIT) are Extracellular-facing. Residues 356-376 (PLMFTGYGLLFLSLVVTPIIR) form a helical membrane-spanning segment. The Cytoplasmic segment spans residues 377–388 (AKLSRLVRQSEQ). A helical transmembrane segment spans residues 389–414 (GALFSALACVNGLAMLMASGIFNSLY). The Extracellular portion of the chain corresponds to 415–422 (PATLNLMK). The helical transmembrane segment at 423-441 (GFPFLLAAGLLFIPAILMG) threads the bilayer. Over 442 to 459 (ILERDNHCPEFQEFSQSP) the chain is Cytoplasmic. S458 is subject to Phosphoserine.

It belongs to the major facilitator superfamily. SLC46A family. Monomer. As to expression, expressed in retina and retinal pigment epithelium.

Its subcellular location is the cell membrane. It is found in the apical cell membrane. The protein localises to the basolateral cell membrane. The protein resides in the endosome membrane. It localises to the cytoplasm. The catalysed reaction is folate(in) + H(+)(in) = folate(out) + H(+)(out). It carries out the reaction (6S)-5-methyl-5,6,7,8-tetrahydrofolate(in) + H(+)(in) = (6S)-5-methyl-5,6,7,8-tetrahydrofolate(out) + H(+)(out). It catalyses the reaction methotrexate(in) + H(+)(in) = methotrexate(out) + H(+)(out). The enzyme catalyses pemetrexed(in) + H(+)(in) = pemetrexed(out) + H(+)(out). Proton-coupled folate symporter that mediates folate absorption using an H(+) gradient as a driving force. Involved in the intestinal absorption of folates at the brush-border membrane of the proximal jejunum, and the transport from blood to cerebrospinal fluid across the choroid plexus. Functions at acidic pH via alternate outward- and inward-open conformation states. Protonation of residues in the outward open state primes the protein for transport. Binding of folate promotes breaking of salt bridge network and subsequent closure of the extracellular gate, leading to the inward-open state and release of protons and folate. Also able to transport antifolate drugs, such as methotrexate and pemetrexed. Involved in FOLR1-mediated endocytosis by serving as a route of export of folates from acidified endosomes. Also acts as a lower-affinity, pH-independent heme carrier protein and constitutes the main importer of heme in the intestine. Imports heme in the retina and retinal pigment epithelium, in neurons of the hippocampus, in hepatocytes and in the renal epithelial cells. Hence, participates in the trafficking of heme and increases intracellular iron content. The protein is Proton-coupled folate transporter of Bos taurus (Bovine).